A 325-amino-acid chain; its full sequence is NADH-quinone oxidoreductase subunit H (325 aa).

9 helical membrane-spanning segments follow: residues 11–31 (ILLS…CGAF), 50–69 (NRVG…KMFF), 81–101 (VIFT…FAIV), 114–134 (IGIL…LFAG), 154–174 (VSYE…AGSF), 186–206 (LWNV…GVAV), 237–257 (FFVG…TLFF), 265–285 (LPPF…FILI), and 304–324 (VCLP…LWQA).

This sequence belongs to the complex I subunit 1 family. As to quaternary structure, NDH-1 is composed of 13 different subunits. Subunits NuoA, H, J, K, L, M, N constitute the membrane sector of the complex.

It is found in the cell inner membrane. The catalysed reaction is a quinone + NADH + 5 H(+)(in) = a quinol + NAD(+) + 4 H(+)(out). In terms of biological role, NDH-1 shuttles electrons from NADH, via FMN and iron-sulfur (Fe-S) centers, to quinones in the respiratory chain. The immediate electron acceptor for the enzyme in this species is believed to be ubiquinone. Couples the redox reaction to proton translocation (for every two electrons transferred, four hydrogen ions are translocated across the cytoplasmic membrane), and thus conserves the redox energy in a proton gradient. This subunit may bind ubiquinone. The protein is NADH-quinone oxidoreductase subunit H of Salmonella arizonae (strain ATCC BAA-731 / CDC346-86 / RSK2980).